The chain runs to 163 residues: Nucleotide-binding protein tll0793 (163 aa).

It belongs to the YajQ family.

Its function is as follows. Nucleotide-binding protein. This chain is Nucleotide-binding protein tll0793, found in Thermosynechococcus vestitus (strain NIES-2133 / IAM M-273 / BP-1).